Consider the following 307-residue polypeptide: 4-hydroxythreonine-4-phosphate dehydrogenase (307 aa).

The substrate site is built by His-126 and Thr-127. His-156, His-195, and His-251 together coordinate a divalent metal cation. 3 residues coordinate substrate: Lys-259, Asn-268, and Arg-277.

Belongs to the PdxA family. In terms of assembly, homodimer. Zn(2+) is required as a cofactor. It depends on Mg(2+) as a cofactor. Co(2+) serves as cofactor.

Its subcellular location is the cytoplasm. The catalysed reaction is 4-(phosphooxy)-L-threonine + NAD(+) = 3-amino-2-oxopropyl phosphate + CO2 + NADH. It participates in cofactor biosynthesis; pyridoxine 5'-phosphate biosynthesis; pyridoxine 5'-phosphate from D-erythrose 4-phosphate: step 4/5. In terms of biological role, catalyzes the NAD(P)-dependent oxidation of 4-(phosphooxy)-L-threonine (HTP) into 2-amino-3-oxo-4-(phosphooxy)butyric acid which spontaneously decarboxylates to form 3-amino-2-oxopropyl phosphate (AHAP). This chain is 4-hydroxythreonine-4-phosphate dehydrogenase, found in Helicobacter pylori (strain ATCC 700392 / 26695) (Campylobacter pylori).